The chain runs to 237 residues: Phosphatidylserine decarboxylase proenzyme (237 aa).

Ser-206 (schiff-base intermediate with substrate; via pyruvic acid) is an active-site residue. Ser-206 bears the Pyruvic acid (Ser); by autocatalysis mark.

The protein belongs to the phosphatidylserine decarboxylase family. PSD-A subfamily. In terms of assembly, heterodimer of a large membrane-associated beta subunit and a small pyruvoyl-containing alpha subunit. The cofactor is pyruvate. Post-translationally, is synthesized initially as an inactive proenzyme. Formation of the active enzyme involves a self-maturation process in which the active site pyruvoyl group is generated from an internal serine residue via an autocatalytic post-translational modification. Two non-identical subunits are generated from the proenzyme in this reaction, and the pyruvate is formed at the N-terminus of the alpha chain, which is derived from the carboxyl end of the proenzyme. The post-translation cleavage follows an unusual pathway, termed non-hydrolytic serinolysis, in which the side chain hydroxyl group of the serine supplies its oxygen atom to form the C-terminus of the beta chain, while the remainder of the serine residue undergoes an oxidative deamination to produce ammonia and the pyruvoyl prosthetic group on the alpha chain.

It is found in the cell membrane. The enzyme catalyses a 1,2-diacyl-sn-glycero-3-phospho-L-serine + H(+) = a 1,2-diacyl-sn-glycero-3-phosphoethanolamine + CO2. Its pathway is phospholipid metabolism; phosphatidylethanolamine biosynthesis; phosphatidylethanolamine from CDP-diacylglycerol: step 2/2. Functionally, catalyzes the formation of phosphatidylethanolamine (PtdEtn) from phosphatidylserine (PtdSer). This Mycobacteroides abscessus (strain ATCC 19977 / DSM 44196 / CCUG 20993 / CIP 104536 / JCM 13569 / NCTC 13031 / TMC 1543 / L948) (Mycobacterium abscessus) protein is Phosphatidylserine decarboxylase proenzyme.